We begin with the raw amino-acid sequence, 499 residues long: Glucose-6-phosphate isomerase (499 aa).

Residue Glu352 is the Proton donor of the active site. Catalysis depends on residues His383 and Lys487.

Belongs to the GPI family.

Its subcellular location is the cytoplasm. It catalyses the reaction alpha-D-glucose 6-phosphate = beta-D-fructose 6-phosphate. Its pathway is carbohydrate biosynthesis; gluconeogenesis. It functions in the pathway carbohydrate degradation; glycolysis; D-glyceraldehyde 3-phosphate and glycerone phosphate from D-glucose: step 2/4. Functionally, catalyzes the reversible isomerization of glucose-6-phosphate to fructose-6-phosphate. This chain is Glucose-6-phosphate isomerase, found in Legionella pneumophila (strain Lens).